The sequence spans 258 residues: Ubiquinone/menaquinone biosynthesis C-methyltransferase UbiE (258 aa).

The segment at 1 to 21 (MPESRTSADGGMETSYGFREV) is disordered. S-adenosyl-L-methionine is bound by residues T81, D102, and 130 to 131 (NA).

Belongs to the class I-like SAM-binding methyltransferase superfamily. MenG/UbiE family.

The catalysed reaction is a 2-demethylmenaquinol + S-adenosyl-L-methionine = a menaquinol + S-adenosyl-L-homocysteine + H(+). The enzyme catalyses a 2-methoxy-6-(all-trans-polyprenyl)benzene-1,4-diol + S-adenosyl-L-methionine = a 5-methoxy-2-methyl-3-(all-trans-polyprenyl)benzene-1,4-diol + S-adenosyl-L-homocysteine + H(+). It functions in the pathway quinol/quinone metabolism; menaquinone biosynthesis; menaquinol from 1,4-dihydroxy-2-naphthoate: step 2/2. The protein operates within cofactor biosynthesis; ubiquinone biosynthesis. Methyltransferase required for the conversion of demethylmenaquinol (DMKH2) to menaquinol (MKH2) and the conversion of 2-polyprenyl-6-methoxy-1,4-benzoquinol (DDMQH2) to 2-polyprenyl-3-methyl-6-methoxy-1,4-benzoquinol (DMQH2). The polypeptide is Ubiquinone/menaquinone biosynthesis C-methyltransferase UbiE (Rhizobium leguminosarum bv. trifolii (strain WSM2304)).